Here is a 728-residue protein sequence, read N- to C-terminus: Homoaconitase, mitochondrial (728 aa).

The transit peptide at 1 to 24 (MVAIPRLARLSVPAWALSARGRFY) directs the protein to the mitochondrion. [4Fe-4S] cluster-binding residues include Cys-362, Cys-422, and Cys-425.

The protein belongs to the aconitase/IPM isomerase family. [4Fe-4S] cluster is required as a cofactor.

Its subcellular location is the mitochondrion. The catalysed reaction is (2R,3S)-homoisocitrate = cis-homoaconitate + H2O. The protein operates within amino-acid biosynthesis; L-lysine biosynthesis via AAA pathway; L-alpha-aminoadipate from 2-oxoglutarate: step 3/5. Catalyzes the reversible hydration of cis-homoaconitate to (2R,3S)-homoisocitrate, a step in the alpha-aminoadipate pathway for lysine biosynthesis. The chain is Homoaconitase, mitochondrial (LYS4) from Cryptococcus neoformans var. neoformans serotype D (strain B-3501A) (Filobasidiella neoformans).